The chain runs to 504 residues: Glutamate--tRNA ligase (504 aa).

A 'HIGH' region motif is present at residues 12–22; the sequence is PSPTGALHIGG. Positions 260–264 match the 'KMSKS' region motif; the sequence is KLSKR. K263 provides a ligand contact to ATP.

It belongs to the class-I aminoacyl-tRNA synthetase family. Glutamate--tRNA ligase type 1 subfamily. Monomer.

It localises to the cytoplasm. The enzyme catalyses tRNA(Glu) + L-glutamate + ATP = L-glutamyl-tRNA(Glu) + AMP + diphosphate. Functionally, catalyzes the attachment of glutamate to tRNA(Glu) in a two-step reaction: glutamate is first activated by ATP to form Glu-AMP and then transferred to the acceptor end of tRNA(Glu). In Bacteroides thetaiotaomicron (strain ATCC 29148 / DSM 2079 / JCM 5827 / CCUG 10774 / NCTC 10582 / VPI-5482 / E50), this protein is Glutamate--tRNA ligase.